The primary structure comprises 107 residues: Nucleoid-associated protein Daro_0807 (107 aa).

It belongs to the YbaB/EbfC family. Homodimer.

It localises to the cytoplasm. It is found in the nucleoid. In terms of biological role, binds to DNA and alters its conformation. May be involved in regulation of gene expression, nucleoid organization and DNA protection. In Dechloromonas aromatica (strain RCB), this protein is Nucleoid-associated protein Daro_0807.